The primary structure comprises 356 residues: Histidinol-phosphate aminotransferase (356 aa).

An N6-(pyridoxal phosphate)lysine modification is found at Lys-214.

It belongs to the class-II pyridoxal-phosphate-dependent aminotransferase family. Histidinol-phosphate aminotransferase subfamily. As to quaternary structure, homodimer. It depends on pyridoxal 5'-phosphate as a cofactor.

The catalysed reaction is L-histidinol phosphate + 2-oxoglutarate = 3-(imidazol-4-yl)-2-oxopropyl phosphate + L-glutamate. It participates in amino-acid biosynthesis; L-histidine biosynthesis; L-histidine from 5-phospho-alpha-D-ribose 1-diphosphate: step 7/9. In Aromatoleum aromaticum (strain DSM 19018 / LMG 30748 / EbN1) (Azoarcus sp. (strain EbN1)), this protein is Histidinol-phosphate aminotransferase.